Consider the following 542-residue polypeptide: T-complex protein 1 subunit delta (542 aa).

Residues 1 to 16 are compositionally biased toward low complexity; it reads MPENVAPRTGPPAGAA. The tract at residues 1–31 is disordered; the sequence is MPENVAPRTGPPAGAAGAAGGRGKSAYQDRD. The residue at position 22 (Arg-22) is an Omega-N-methylarginine. An N6-acetyllysine modification is found at Lys-24. Phosphoserine is present on Ser-39. An ADP-binding site is contributed by Gly-56. ATP is bound at residue Gly-56. Asp-107 contacts Mg(2+). Gly-108, Thr-109, Thr-110, Ser-111, Asn-175, Ser-176, and Lys-177 together coordinate ADP. ATP-binding residues include Gly-108 and Thr-109. Residue Lys-177 participates in ATP binding. Phosphoserine occurs at positions 187 and 205. An N6-acetyllysine mark is found at Lys-291, Lys-305, Lys-322, and Lys-329. Gly-428 is a binding site for ADP. Ser-447 bears the Phosphoserine mark. Residue Gln-513 participates in ADP binding.

This sequence belongs to the TCP-1 chaperonin family. As to quaternary structure, component of the chaperonin-containing T-complex (TRiC), a hexadecamer composed of two identical back-to-back stacked rings enclosing a protein folding chamber. Each ring is made up of eight different subunits: TCP1/CCT1, CCT2, CCT3, CCT4, CCT5, CCT6A/CCT6, CCT7, CCT8. Interacts with PACRG. Interacts with DNAAF4. Interacts with DLEC1.

It is found in the cytoplasm. Its subcellular location is the melanosome. The protein resides in the cytoskeleton. The protein localises to the microtubule organizing center. It localises to the centrosome. It is found in the cilium basal body. It carries out the reaction ATP + H2O = ADP + phosphate + H(+). In terms of biological role, component of the chaperonin-containing T-complex (TRiC), a molecular chaperone complex that assists the folding of actin, tubulin and other proteins upon ATP hydrolysis. The TRiC complex mediates the folding of WRAP53/TCAB1, thereby regulating telomere maintenance. As part of the TRiC complex may play a role in the assembly of BBSome, a complex involved in ciliogenesis regulating transports vesicles to the cilia. The polypeptide is T-complex protein 1 subunit delta (CCT4) (Bos taurus (Bovine)).